We begin with the raw amino-acid sequence, 442 residues long: 3-isopropylmalate dehydratase large subunit (442 aa).

[4Fe-4S] cluster is bound by residues C347, C407, and C410.

It belongs to the aconitase/IPM isomerase family. LeuC type 1 subfamily. Heterodimer of LeuC and LeuD. [4Fe-4S] cluster is required as a cofactor.

The catalysed reaction is (2R,3S)-3-isopropylmalate = (2S)-2-isopropylmalate. The protein operates within amino-acid biosynthesis; L-leucine biosynthesis; L-leucine from 3-methyl-2-oxobutanoate: step 2/4. Its function is as follows. Catalyzes the isomerization between 2-isopropylmalate and 3-isopropylmalate, via the formation of 2-isopropylmaleate. This is 3-isopropylmalate dehydratase large subunit from Buchnera aphidicola subsp. Uroleucon helianthicola.